Consider the following 202-residue polypeptide: Small ribosomal subunit protein uS4c (202 aa).

Residues 90-153 enclose the S4 RNA-binding domain; the sequence is MRLDNIIFRL…KSETIISKNI (64 aa).

This sequence belongs to the universal ribosomal protein uS4 family. In terms of assembly, part of the 30S ribosomal subunit. Contacts protein S5. The interaction surface between S4 and S5 is involved in control of translational fidelity.

It localises to the plastid. It is found in the chloroplast. In terms of biological role, one of the primary rRNA binding proteins, it binds directly to 16S rRNA where it nucleates assembly of the body of the 30S subunit. Its function is as follows. With S5 and S12 plays an important role in translational accuracy. This is Small ribosomal subunit protein uS4c (rps4) from Catharomnion ciliatum (Moss).